A 444-amino-acid polypeptide reads, in one-letter code: MKTVQLDQLKQQFPLIQTLQDYQETFWFNPHRYPLNEALAKVGLTEQDVKEAEARLARFAPYLAKVFPETQAQHGKIESALVKIADMQQALSLQKHKTLIGKLWLKKDSHLPISGSIKARGGIYEVLAHAEKLAIEAGLLKLEDDYSKLDQDSFRTFFSKYQIAVGSTGNLGLSIGIMSAKLGFRVSVHMSADARQWKKDKLRSLGVNVVEYASDYGVAVEEGRKAAEQDPFCFFIDDENSTTLFLGYAVAGLRLKQQFEQKQIKVDADHPLFVYLPCGVGGGPGGVSFGLKLAFGEHVHCIFAEPTHSPCMLLGVYTGLHDQISVNDIGLDNITAADGLAVGRASGFVGRAMQQLIDGYYTIHDECLYELIALLNQTENIQVEPSAAAGMMGPYYVQTTPDYLALHQLSAEKLQHATHVVWATGGGMVPPDEMQKYLTHSQSN.

Lysine 118 is subject to N6-(pyridoxal phosphate)lysine.

It belongs to the serine/threonine dehydratase family. DsdA subfamily. It depends on pyridoxal 5'-phosphate as a cofactor.

The enzyme catalyses D-serine = pyruvate + NH4(+). The sequence is that of Probable D-serine dehydratase from Acinetobacter baumannii (strain ATCC 17978 / DSM 105126 / CIP 53.77 / LMG 1025 / NCDC KC755 / 5377).